Here is a 186-residue protein sequence, read N- to C-terminus: UPF0397 protein LBUL_1584 (186 aa).

Transmembrane regions (helical) follow at residues 13–33 (IAAL…ASIP), 46–66 (AFLA…VGFI), 79–99 (TWWN…LYAL), 114–134 (VIFN…LGSV), and 150–170 (QAGL…TILL).

The protein belongs to the UPF0397 family.

The protein resides in the cell membrane. The sequence is that of UPF0397 protein LBUL_1584 from Lactobacillus delbrueckii subsp. bulgaricus (strain ATCC BAA-365 / Lb-18).